A 417-amino-acid chain; its full sequence is NADH-quinone oxidoreductase subunit D (417 aa).

Belongs to the complex I 49 kDa subunit family. NDH-1 is composed of 14 different subunits. Subunits NuoB, C, D, E, F, and G constitute the peripheral sector of the complex.

It is found in the cell inner membrane. It carries out the reaction a quinone + NADH + 5 H(+)(in) = a quinol + NAD(+) + 4 H(+)(out). Its function is as follows. NDH-1 shuttles electrons from NADH, via FMN and iron-sulfur (Fe-S) centers, to quinones in the respiratory chain. The immediate electron acceptor for the enzyme in this species is believed to be ubiquinone. Couples the redox reaction to proton translocation (for every two electrons transferred, four hydrogen ions are translocated across the cytoplasmic membrane), and thus conserves the redox energy in a proton gradient. The sequence is that of NADH-quinone oxidoreductase subunit D from Chromobacterium violaceum (strain ATCC 12472 / DSM 30191 / JCM 1249 / CCUG 213 / NBRC 12614 / NCIMB 9131 / NCTC 9757 / MK).